The chain runs to 149 residues: Transcriptional repressor NrdR (149 aa).

The segment at 3-34 is a zinc-finger region; the sequence is CPFCSATDTKVIDSRLVADGHQVRRRRECAEC. Residues 49-139 form the ATP-cone domain; that stretch reads PRVVKQDGSR…VYRAFEDVSE (91 aa).

This sequence belongs to the NrdR family. The cofactor is Zn(2+).

Its function is as follows. Negatively regulates transcription of bacterial ribonucleotide reductase nrd genes and operons by binding to NrdR-boxes. This chain is Transcriptional repressor NrdR, found in Shewanella woodyi (strain ATCC 51908 / MS32).